The sequence spans 70 residues: UPF0270 protein VP2791 (70 aa).

It belongs to the UPF0270 family.

This Vibrio parahaemolyticus serotype O3:K6 (strain RIMD 2210633) protein is UPF0270 protein VP2791.